The primary structure comprises 188 residues: Inner membrane-spanning protein YciB (188 aa).

Helical transmembrane passes span 23–43 (FQKATWVLVAASAAALAIGYA), 49–69 (AMLPLFFGGMALVFGTLGLIF), 73–93 (VFVKIKVTVINLALASFLVGG), 116–133 (WRTLTLRYGAYFAFVAII), and 149–169 (FRLALLPVALVFVATQLPFMM).

Belongs to the YciB family.

It localises to the cell inner membrane. Its function is as follows. Plays a role in cell envelope biogenesis, maintenance of cell envelope integrity and membrane homeostasis. The protein is Inner membrane-spanning protein YciB of Caulobacter vibrioides (strain ATCC 19089 / CIP 103742 / CB 15) (Caulobacter crescentus).